A 538-amino-acid chain; its full sequence is RNA-binding protein RO60 (538 aa).

Methionine 1 is modified (N-acetylmethionine). A phosphoserine mark is found at serine 4 and serine 19. Residues 16–369 (IANSQDGYVW…TFKTVEPTGK (354 aa)) enclose the TROVE domain. Positions 120–284 (RIPTHLFTFI…EMPLTALLRN (165 aa)) are RNA-binding. N6-acetyllysine occurs at positions 224 and 359. The tract at residues 361–538 (FKTVEPTGKR…VIRNFTLDMI (178 aa)) is VWFA-like domain. A divalent metal cation contacts are provided by serine 378, serine 380, and threonine 445.

It belongs to the Ro 60 kDa family. As to quaternary structure, identified in a IGF2BP1-dependent mRNP granule complex containing untranslated mRNAs. Found in a complex with PUF60 and Y5 RNA. Interacts with RAB11FIP5.

It localises to the cytoplasm. Functionally, RNA-binding protein that binds to misfolded non-coding RNAs, pre-5S rRNA, and several small cytoplasmic RNA molecules known as Y RNAs. Binds to endogenous Alu retroelements which are induced by type I interferon and stimulate porinflammatory cytokine secretion. Regulates the expression of Alu retroelements as well as inflammatory genes. May play roles in cilia formation and/or maintenance. This chain is RNA-binding protein RO60, found in Homo sapiens (Human).